A 1040-amino-acid polypeptide reads, in one-letter code: Multidrug resistance protein MdtB (1040 aa).

The next 12 membrane-spanning stretches (helical) occupy residues 25–45 (LLMV…PVAA), 342–362 (DTQF…YLFL), 369–389 (IIPG…MVFL), 396–416 (LTLM…IVVI), 440–460 (IGFT…PLLF), 472–492 (FAVT…TLTP), 537–557 (WLTL…WVFI), 863–883 (LGST…VLGV), 888–908 (FIHP…ALLA), 911–931 (IAGS…IGIV), 967–987 (PILM…LSTG), and 998–1018 (IGMV…TPVI).

The protein belongs to the resistance-nodulation-cell division (RND) (TC 2.A.6) family. MdtB subfamily. Part of a tripartite efflux system composed of MdtA, MdtB and MdtC. MdtB forms a heteromultimer with MdtC.

Its subcellular location is the cell inner membrane. The protein is Multidrug resistance protein MdtB of Citrobacter koseri (strain ATCC BAA-895 / CDC 4225-83 / SGSC4696).